The following is a 309-amino-acid chain: Tagatose-6-phosphate kinase (309 aa).

Belongs to the carbohydrate kinase PfkB family. LacC subfamily.

It catalyses the reaction D-tagatofuranose 6-phosphate + ATP = D-tagatofuranose 1,6-bisphosphate + ADP + H(+). It participates in carbohydrate metabolism; D-tagatose 6-phosphate degradation; D-glyceraldehyde 3-phosphate and glycerone phosphate from D-tagatose 6-phosphate: step 1/2. The sequence is that of Tagatose-6-phosphate kinase from Streptococcus pyogenes serotype M4 (strain MGAS10750).